The chain runs to 75 residues: Small capsomere-interacting protein (75 aa).

The protein belongs to the herpesviridae small capsomere-interacting protein family. Interacts with the major capsid protein/MCP.

The protein localises to the virion. The protein resides in the host nucleus. Functionally, participates in the assembly of the infectious particles by decorating the outer surface of the capsid shell and thus forming a layer between the capsid and the tegument. Complexes composed of the capsid protein VP5 and UL48A assemble together in the host cytoplasm and are translocated to the nucleus, where they accumulate and participate in capsid assembly. Its function is as follows. Participates in the assembly of the infectious particles by decorating the outer surface of the capsid shell and thus forming a layer between the capsid and the tegument. Complexes composed of the major capsid protein and small capsomere-interacting protein/SCP assemble together in the host cytoplasm and are translocated to the nucleus, where they accumulate and participate in capsid assembly. The polypeptide is Small capsomere-interacting protein (Homo sapiens (Human)).